Here is an 86-residue protein sequence, read N- to C-terminus: Omega-theraphotoxin-Hhn1d (86 aa).

The first 21 residues, 1–21 (MKSIVFVALFGLALLAVVCSA), serve as a signal peptide directing secretion. Residues 22 to 50 (SEDAHKELLKEVVRAMVVDKTDAVQAEER) constitute a propeptide that is removed on maturation. 3 disulfide bridges follow: cysteine 52–cysteine 66, cysteine 59–cysteine 71, and cysteine 65–cysteine 78.

Belongs to the neurotoxin 10 (Hwtx-1) family. 17 (Hntx-9) subfamily. In terms of tissue distribution, expressed by the venom gland.

It localises to the secreted. In terms of biological role, ion channel inhibitor. This is Omega-theraphotoxin-Hhn1d from Cyriopagopus hainanus (Chinese bird spider).